The primary structure comprises 103 residues: Large ribosomal subunit protein bL21 (103 aa).

It belongs to the bacterial ribosomal protein bL21 family. In terms of assembly, part of the 50S ribosomal subunit. Contacts protein L20.

Its function is as follows. This protein binds to 23S rRNA in the presence of protein L20. This is Large ribosomal subunit protein bL21 from Tolumonas auensis (strain DSM 9187 / NBRC 110442 / TA 4).